The sequence spans 434 residues: MAARRRHVAAGAGAPAPAAGEWAAVTAGGGAAWALSPVEEVGTKQELMRRTGLPPRDLRALDPALSSAASASSCRPSAITGRDRAVVVNLDRARAVITASEVLVPSPRDPAVAPLVRELRARLALAASPTPAPSPSPPQHGMAVGMDGSISPSQASRGGEEAAGNGKDGEALGGGDKALPFEFRALEVCLEFACKSLEHETCTLEKEAYPALDELTSKVSTLNLERVRQIKSRLVAISGKVQKVRDELEHLLDDDMDMAALHLTEKLAYQSSRFDIDKEASELEDHSSRDEEGVEGGGGGDGDDETIAGGGSFSPNTDELEILLESYFVQIDGTLNSLSTLREYVEDTEDYINMMLDEKQNQLLQMGILLSTGTLVSSCAIAVTGVFGINVHISLYDSPASSAAFPCAAAGIVAGSLALYLAALLCYKRAGILQ.

Disordered stretches follow at residues 126 to 171 (AASP…DGEA) and 279 to 311 (EASE…AGGG). The span at 279–291 (EASELEDHSSRDE) shows a compositional bias: basic and acidic residues. The next 2 helical transmembrane spans lie at 367 to 387 (GILL…TGVF) and 405 to 425 (FPCA…AALL).

The protein belongs to the CorA metal ion transporter (MIT) (TC 1.A.35.5) family.

It is found in the membrane. Its function is as follows. Putative magnesium transporter. This is Putative magnesium transporter MRS2-D (MRS2-D) from Oryza sativa subsp. japonica (Rice).